A 337-amino-acid chain; its full sequence is Hairy/enhancer-of-split related with YRPW motif protein 2 (337 aa).

Residues 1-52 (MKRPCEETTSESDMDETIDVGSENNYSGQSTSSVIRLNSPTTTSQIMARKKR) form a disordered region. The span at 8–18 (TTSESDMDETI) shows a compositional bias: acidic residues. Positions 22 to 46 (SENNYSGQSTSSVIRLNSPTTTSQI) are enriched in polar residues. Residues 47–116 (MARKKRRGII…GGKGYFDAHA (70 aa)) form a transcriptional repression and interaction with NCOR1 and SIN3A region. The region spanning 48–103 (ARKKRRGIIEKRRRDRINNSLSELRRLVPTAFEKQGSAKLEKAEILQMTVDHLKML) is the bHLH domain. The Orange domain occupies 122-157 (MSIGFRECLTEVARYLSSVEGLDSSDPLRVRLVSHL). Over residues 307–325 (LSVSATSSPQQTSSGTNNK) the composition is skewed to polar residues. Residues 307-337 (LSVSATSSPQQTSSGTNNKPYRPWGTEVGAF) are disordered. The YRPW motif motif lies at 327 to 330 (YRPW).

Belongs to the HEY family. May self-associate. Interacts with GATA4, HES1 and HEYL. Interacts with HDAC1, NCOR1 and SIN3A. Interacts with ARNT and GATA6.

It is found in the nucleus. Downstream effector of Notch signaling which may be required for cardiovascular development. Transcriptional repressor which binds preferentially to the canonical E box sequence 5'-CACGTG-3'. Represses transcription by the cardiac transcriptional activators GATA4 and GATA6. The chain is Hairy/enhancer-of-split related with YRPW motif protein 2 (HEY2) from Homo sapiens (Human).